A 305-amino-acid chain; its full sequence is Oxygen-dependent coproporphyrinogen-III oxidase (305 aa).

Position 98 (Ser-98) interacts with substrate. His-102 and His-112 together coordinate a divalent metal cation. The active-site Proton donor is the His-112. 114–116 (NVR) provides a ligand contact to substrate. A divalent metal cation-binding residues include His-151 and His-181. The segment at 246–281 (YVEFNLVYDRGTLFGLQSGGRTESILMSMPPLARWE) is important for dimerization. Residue 264-266 (GGR) participates in substrate binding.

Belongs to the aerobic coproporphyrinogen-III oxidase family. As to quaternary structure, homodimer. It depends on a divalent metal cation as a cofactor.

It is found in the cytoplasm. The enzyme catalyses coproporphyrinogen III + O2 + 2 H(+) = protoporphyrinogen IX + 2 CO2 + 2 H2O. It functions in the pathway porphyrin-containing compound metabolism; protoporphyrin-IX biosynthesis; protoporphyrinogen-IX from coproporphyrinogen-III (O2 route): step 1/1. Involved in the heme biosynthesis. Catalyzes the aerobic oxidative decarboxylation of propionate groups of rings A and B of coproporphyrinogen-III to yield the vinyl groups in protoporphyrinogen-IX. The chain is Oxygen-dependent coproporphyrinogen-III oxidase from Vibrio campbellii (strain ATCC BAA-1116).